Here is a 626-residue protein sequence, read N- to C-terminus: DNA primase (626 aa).

The segment at 39–63 adopts a CHC2-type zinc-finger fold; the sequence is CPFHGEKTPSFSVSPEKQIFHCFGC. One can recognise a Toprim domain in the interval 264–346; the sequence is EEITLMEGFM…DVFVLQLPAG (83 aa). Mg(2+) contacts are provided by Glu-270, Asp-314, and Asp-316.

The protein belongs to the DnaG primase family. As to quaternary structure, monomer. Interacts with DnaB. It depends on Zn(2+) as a cofactor. Mg(2+) is required as a cofactor.

It carries out the reaction ssDNA + n NTP = ssDNA/pppN(pN)n-1 hybrid + (n-1) diphosphate.. Its function is as follows. RNA polymerase that catalyzes the synthesis of short RNA molecules used as primers for DNA polymerase during DNA replication. The sequence is that of DNA primase from Listeria innocua serovar 6a (strain ATCC BAA-680 / CLIP 11262).